Consider the following 277-residue polypeptide: Large ribosomal subunit protein uL2c (277 aa).

Disordered stretches follow at residues 36 to 56 and 225 to 259; these read NKHS…HRGG and MNSV…GSKS.

This sequence belongs to the universal ribosomal protein uL2 family. As to quaternary structure, part of the 50S ribosomal subunit.

It localises to the plastid. It is found in the chloroplast. The chain is Large ribosomal subunit protein uL2c (rpl2) from Psilotum nudum (Whisk fern).